The primary structure comprises 450 residues: Eukaryotic translation initiation factor 3 subunit E (450 aa).

The PCI domain occupies 255 to 424; that stretch reads TELFFSPAYI…GTVIMNHPPQ (170 aa).

It belongs to the eIF-3 subunit E family. In terms of assembly, component of the eukaryotic translation initiation factor 3 (eIF-3) complex.

It is found in the cytoplasm. Component of the eukaryotic translation initiation factor 3 (eIF-3) complex, which is involved in protein synthesis of a specialized repertoire of mRNAs and, together with other initiation factors, stimulates binding of mRNA and methionyl-tRNAi to the 40S ribosome. The eIF-3 complex specifically targets and initiates translation of a subset of mRNAs involved in cell proliferation. The sequence is that of Eukaryotic translation initiation factor 3 subunit E (int6) from Aspergillus clavatus (strain ATCC 1007 / CBS 513.65 / DSM 816 / NCTC 3887 / NRRL 1 / QM 1276 / 107).